The following is a 118-amino-acid chain: Peptidyl-tRNA hydrolase (118 aa).

The protein belongs to the PTH2 family.

The protein resides in the cytoplasm. The catalysed reaction is an N-acyl-L-alpha-aminoacyl-tRNA + H2O = an N-acyl-L-amino acid + a tRNA + H(+). Functionally, the natural substrate for this enzyme may be peptidyl-tRNAs which drop off the ribosome during protein synthesis. The protein is Peptidyl-tRNA hydrolase of Thermococcus onnurineus (strain NA1).